Consider the following 505-residue polypeptide: ATP synthase subunit alpha, cyanelle (505 aa).

170 to 177 (GDRQTGKT) contacts ATP.

This sequence belongs to the ATPase alpha/beta chains family. As to quaternary structure, F-type ATPases have 2 components, CF(1) - the catalytic core - and CF(0) - the membrane proton channel. CF(1) has five subunits: alpha(3), beta(3), gamma(1), delta(1), epsilon(1). CF(0) has four main subunits: a, b, b' and c.

Its subcellular location is the plastid. The protein resides in the cyanelle thylakoid membrane. It carries out the reaction ATP + H2O + 4 H(+)(in) = ADP + phosphate + 5 H(+)(out). In terms of biological role, produces ATP from ADP in the presence of a proton gradient across the membrane. The alpha chain is a regulatory subunit. The protein is ATP synthase subunit alpha, cyanelle of Cyanophora paradoxa.